We begin with the raw amino-acid sequence, 193 residues long: General stress protein 16U (193 aa).

This sequence belongs to the CAPAB/TerDEXZ family.

The sequence is that of General stress protein 16U (yceD) from Bacillus subtilis (strain 168).